Reading from the N-terminus, the 284-residue chain is Protein phosphatase 1 regulatory subunit 3B (284 aa).

The PP1-binding motif signature appears at 61 to 64 (RVSF). The CBM21 domain maps to 124 to 232 (RNRLQTDHVC…SNKGKNYRII (109 aa)). Ser260 carries the phosphoserine modification.

Interacts with glycogen, PPP1CC catalytic subunit of PP1 and PYGL. Associates with glycogen particles. Forms complexes with debranching enzyme, glycogen phosphorylase, glycogen synthase and phosphorylase kinase which is necessary for its regulation of PP1 activity.

Functionally, acts as a glycogen-targeting subunit for phosphatase PP1. Facilitates interaction of the PP1 with enzymes of the glycogen metabolism and regulates its activity. Suppresses the rate at which PP1 dephosphorylates (inactivates) glycogen phosphorylase and enhances the rate at which it activates glycogen synthase and therefore limits glycogen breakdown. Its activity is inhibited by PYGL, resulting in inhibition of the glycogen synthase and glycogen phosphorylase phosphatase activities of PP1. Dramatically increases basal and insulin-stimulated glycogen synthesis upon overexpression in hepatocytes. The sequence is that of Protein phosphatase 1 regulatory subunit 3B (PPP1R3B) from Bos taurus (Bovine).